The chain runs to 122 residues: Large ribosomal subunit protein uL14c (122 aa).

Belongs to the universal ribosomal protein uL14 family. In terms of assembly, part of the 50S ribosomal subunit.

The protein localises to the plastid. Its subcellular location is the chloroplast. Binds to 23S rRNA. The chain is Large ribosomal subunit protein uL14c from Gossypium barbadense (Sea Island cotton).